A 773-amino-acid polypeptide reads, in one-letter code: Cellobiose dehydrogenase (773 aa).

An N-terminal signal peptide occupies residues 1–18; sequence MLGRSLLALLPFVGLAFS. Position 19 is a pyrrolidone carboxylic acid (Gln19). Residues 19-208 are heme domain; that stretch reads QSASQFTDPT…YQNYLNGDSG (190 aa). Heme-binding residues include Met83 and His181. A disordered region spans residues 203–227; sequence LNGDSGNPTTTSTKPTSTSSSVTTG. The segment covering 210 to 227 has biased composition (low complexity); it reads PTTTSTKPTSTSSSVTTG. The oxidoreductase stretch occupies residues 235–773; that stretch reads YDYIIVGAGP…AKILALAGGP (539 aa). Position 236 to 265 (236 to 265) interacts with FAD; it reads DYIIVGAGPGGIIAADRLSEAGKKVLLLER. His707 functions as the Proton acceptor in the catalytic mechanism.

This sequence in the C-terminal section; belongs to the GMC oxidoreductase family. The cofactor is FAD. Heme serves as cofactor.

It localises to the secreted. It catalyses the reaction D-cellobiose + A = D-cellobiono-1,5-lactone + AH2. In terms of biological role, degrades both lignin and cellulose. Oxidizes cellobiose to cellobionolactone. The polypeptide is Cellobiose dehydrogenase (CDH-1) (Phanerodontia chrysosporium (White-rot fungus)).